The following is a 214-amino-acid chain: NADH-quinone oxidoreductase subunit C (214 aa).

The protein belongs to the complex I 30 kDa subunit family. NDH-1 is composed of 14 different subunits. Subunits NuoB, C, D, E, F, and G constitute the peripheral sector of the complex.

The protein resides in the cell inner membrane. The catalysed reaction is a quinone + NADH + 5 H(+)(in) = a quinol + NAD(+) + 4 H(+)(out). NDH-1 shuttles electrons from NADH, via FMN and iron-sulfur (Fe-S) centers, to quinones in the respiratory chain. The immediate electron acceptor for the enzyme in this species is believed to be ubiquinone. Couples the redox reaction to proton translocation (for every two electrons transferred, four hydrogen ions are translocated across the cytoplasmic membrane), and thus conserves the redox energy in a proton gradient. This chain is NADH-quinone oxidoreductase subunit C, found in Francisella tularensis subsp. novicida (strain U112).